Here is a 217-residue protein sequence, read N- to C-terminus: uncharacterized protein (217 aa).

Residues 59 to 76 show a composition bias toward polar residues; the sequence is AQSTIQRTSSLPVPSSSN. Disordered regions lie at residues 59 to 105 and 124 to 217; these read AQST…ETAN and KKSL…HISK. Ser-68 is modified (phosphoserine). Thr-92 is subject to Phosphothreonine. Residues 124-135 are compositionally biased toward basic and acidic residues; sequence KKSLERRVREEQ. Over residues 136 to 147 the composition is skewed to acidic residues; sequence EEKTDNEDDNDV. Over residues 148-157 the composition is skewed to polar residues; that stretch reads EISTQESLEN. Residues 173-188 show a composition bias toward acidic residues; that stretch reads LEDDIEGQEFSFDDQD. Positions 199–217 are enriched in polar residues; that stretch reads WLSSQKQQGSPLTSDHISK.

This is an uncharacterized protein from Schizosaccharomyces pombe (strain 972 / ATCC 24843) (Fission yeast).